The primary structure comprises 99 residues: MIRKAFVMQVNPDAHEEYQRRHNPIWPELEAVLKSHGAHNYAIYLDKARNLLFATVEIESEERWNAVASTDVCQRWWKYMTDVMPANPDNSPVSSELQG.

Residue Tyr18 coordinates substrate. His22 (proton donor) is an active-site residue. Residues Tyr41 and 76–77 (WW) each bind substrate.

Belongs to the rhamnose mutarotase family. As to quaternary structure, homodimer.

Its subcellular location is the cytoplasm. It catalyses the reaction alpha-L-rhamnose = beta-L-rhamnose. It functions in the pathway carbohydrate metabolism; L-rhamnose metabolism. Functionally, involved in the anomeric conversion of L-rhamnose. In Shigella boydii serotype 18 (strain CDC 3083-94 / BS512), this protein is L-rhamnose mutarotase.